The primary structure comprises 466 residues: 3-isopropylmalate dehydratase large subunit (466 aa).

[4Fe-4S] cluster contacts are provided by Cys347, Cys407, and Cys410.

This sequence belongs to the aconitase/IPM isomerase family. LeuC type 1 subfamily. As to quaternary structure, heterodimer of LeuC and LeuD. It depends on [4Fe-4S] cluster as a cofactor.

The catalysed reaction is (2R,3S)-3-isopropylmalate = (2S)-2-isopropylmalate. The protein operates within amino-acid biosynthesis; L-leucine biosynthesis; L-leucine from 3-methyl-2-oxobutanoate: step 2/4. Catalyzes the isomerization between 2-isopropylmalate and 3-isopropylmalate, via the formation of 2-isopropylmaleate. The chain is 3-isopropylmalate dehydratase large subunit from Shewanella halifaxensis (strain HAW-EB4).